The sequence spans 499 residues: Ribulose bisphosphate carboxylase large chain (499 aa).

Substrate contacts are provided by Asn-139 and Thr-189. Lys-191 functions as the Proton acceptor in the catalytic mechanism. Residue Lys-193 participates in substrate binding. 3 residues coordinate Mg(2+): Lys-217, Asp-219, and Glu-220. Position 217 is an N6-carboxylysine (Lys-217). His-309 (proton acceptor) is an active-site residue. Residues Arg-310, His-342, and Ser-394 each coordinate substrate.

It belongs to the RuBisCO large chain family. Type I subfamily. In terms of assembly, heterohexadecamer of 8 large chains and 8 small chains. Requires Mg(2+) as cofactor.

It carries out the reaction 2 (2R)-3-phosphoglycerate + 2 H(+) = D-ribulose 1,5-bisphosphate + CO2 + H2O. It catalyses the reaction D-ribulose 1,5-bisphosphate + O2 = 2-phosphoglycolate + (2R)-3-phosphoglycerate + 2 H(+). Functionally, ruBisCO catalyzes two reactions: the carboxylation of D-ribulose 1,5-bisphosphate, the primary event in carbon dioxide fixation, as well as the oxidative fragmentation of the pentose substrate. Both reactions occur simultaneously and in competition at the same active site. The sequence is that of Ribulose bisphosphate carboxylase large chain from Paraburkholderia xenovorans (strain LB400).